Here is a 150-residue protein sequence, read N- to C-terminus: Transcriptional repressor NrdR (150 aa).

Residues 3 to 34 fold into a zinc finger; that stretch reads CPFCNFEESKVVDSRATDDNTTIRRRRECLNC. Residues 49–139 form the ATP-cone domain; sequence VLVVKKDLAR…VYRQFKDINT (91 aa).

It belongs to the NrdR family. Zn(2+) is required as a cofactor.

Its function is as follows. Negatively regulates transcription of bacterial ribonucleotide reductase nrd genes and operons by binding to NrdR-boxes. In Clostridium botulinum (strain Eklund 17B / Type B), this protein is Transcriptional repressor NrdR.